The sequence spans 604 residues: Elongation factor 4 (604 aa).

Positions Ser7–Ala189 constitute a tr-type G domain. GTP contacts are provided by residues Asp19–Thr24 and Asn136–Asp139.

The protein belongs to the TRAFAC class translation factor GTPase superfamily. Classic translation factor GTPase family. LepA subfamily.

It localises to the cell inner membrane. It catalyses the reaction GTP + H2O = GDP + phosphate + H(+). Required for accurate and efficient protein synthesis under certain stress conditions. May act as a fidelity factor of the translation reaction, by catalyzing a one-codon backward translocation of tRNAs on improperly translocated ribosomes. Back-translocation proceeds from a post-translocation (POST) complex to a pre-translocation (PRE) complex, thus giving elongation factor G a second chance to translocate the tRNAs correctly. Binds to ribosomes in a GTP-dependent manner. This is Elongation factor 4 from Prochlorococcus marinus (strain MIT 9313).